The following is a 317-amino-acid chain: L-lactate dehydrogenase (317 aa).

NAD(+)-binding positions include Val-18, Asp-39, Lys-44, Tyr-69, and 83–84 (GA). Substrate is bound by residues Gln-86, Arg-92, and 124-127 (NPVD). Residues 122–124 (VTN) and Ser-147 contribute to the NAD(+) site. 152–155 (DTAR) serves as a coordination point for substrate. 2 residues coordinate beta-D-fructose 1,6-bisphosphate: Arg-157 and His-172. The Proton acceptor role is filled by His-179. Phosphotyrosine is present on Tyr-225. Thr-234 contacts substrate.

It belongs to the LDH/MDH superfamily. LDH family. As to quaternary structure, homotetramer.

It is found in the cytoplasm. The catalysed reaction is (S)-lactate + NAD(+) = pyruvate + NADH + H(+). It participates in fermentation; pyruvate fermentation to lactate; (S)-lactate from pyruvate: step 1/1. Allosterically activated by fructose 1,6-bisphosphate (FBP). Catalyzes the conversion of lactate to pyruvate. This is L-lactate dehydrogenase from Acetivibrio thermocellus (strain ATCC 27405 / DSM 1237 / JCM 9322 / NBRC 103400 / NCIMB 10682 / NRRL B-4536 / VPI 7372) (Clostridium thermocellum).